Here is a 138-residue protein sequence, read N- to C-terminus: Large ribosomal subunit protein bL19 (138 aa).

It belongs to the bacterial ribosomal protein bL19 family.

Functionally, this protein is located at the 30S-50S ribosomal subunit interface and may play a role in the structure and function of the aminoacyl-tRNA binding site. The chain is Large ribosomal subunit protein bL19 from Leptospira interrogans serogroup Icterohaemorrhagiae serovar copenhageni (strain Fiocruz L1-130).